The sequence spans 543 residues: CTP synthase (543 aa).

The tract at residues 1 to 265 (MTNYIFVTGG…DELVVQRFGL (265 aa)) is amidoligase domain. Residue S13 participates in CTP binding. S13 contributes to the UTP binding site. Residues 14-19 (SLGKGI) and D71 each bind ATP. Mg(2+) is bound by residues D71 and E139. Residues 146–148 (DIE), 186–191 (KTKPTQ), and K222 each bind CTP. Residues 186–191 (KTKPTQ) and K222 contribute to the UTP site. An ATP-binding site is contributed by 238-240 (KDA). The Glutamine amidotransferase type-1 domain occupies 290-541 (TIGMVGKYVE…VKAAGEYYKN (252 aa)). Position 351 (G351) interacts with L-glutamine. C378 acts as the Nucleophile; for glutamine hydrolysis in catalysis. L-glutamine is bound by residues 379-382 (LGMQ), E402, and R469. Active-site residues include H514 and E516.

This sequence belongs to the CTP synthase family. Homotetramer.

The catalysed reaction is UTP + L-glutamine + ATP + H2O = CTP + L-glutamate + ADP + phosphate + 2 H(+). The enzyme catalyses L-glutamine + H2O = L-glutamate + NH4(+). It catalyses the reaction UTP + NH4(+) + ATP = CTP + ADP + phosphate + 2 H(+). The protein operates within pyrimidine metabolism; CTP biosynthesis via de novo pathway; CTP from UDP: step 2/2. With respect to regulation, allosterically activated by GTP, when glutamine is the substrate; GTP has no effect on the reaction when ammonia is the substrate. The allosteric effector GTP functions by stabilizing the protein conformation that binds the tetrahedral intermediate(s) formed during glutamine hydrolysis. Inhibited by the product CTP, via allosteric rather than competitive inhibition. Its function is as follows. Catalyzes the ATP-dependent amination of UTP to CTP with either L-glutamine or ammonia as the source of nitrogen. Regulates intracellular CTP levels through interactions with the four ribonucleotide triphosphates. In Pseudoalteromonas atlantica (strain T6c / ATCC BAA-1087), this protein is CTP synthase.